A 528-amino-acid chain; its full sequence is Nucleoporin ASM4 (528 aa).

The stretch at 2 to 3 (FG) is one FG 1 repeat. Low complexity predominate over residues 23–50 (TTQMFQSQSQLQPQPQPQPQQQQQHLQF). Disordered stretches follow at residues 23-64 (TTQM…FGNS) and 88-144 (IKNG…SMNA). Polar residues-rich tracts occupy residues 51-64 (NGSSDASSLRFGNS) and 97-108 (QHGQGNNPSWVN). An FG 2 repeat occupies 61 to 62 (FG). Residues 110–125 (PKKRFTPHTVIRRKTT) show a composition bias toward basic residues. Residues 127–141 (QNSSSDINQNDDSSS) show a composition bias toward low complexity. FG repeat units lie at residues 195-196 (FG), 274-275 (FG), and 291-292 (FG). The 130-residue stretch at 265-394 (SSSLSAIIVF…IPYSKNAVEQ (130 aa)) folds into the RRM Nup35-type domain. Ser458 and Ser464 each carry phosphoserine. Residues 490-510 (NLLRNLESKMRQQEAKYRNNE) are a coiled coil. The stretch at 523–524 (FG) is one FG 6 repeat.

In terms of assembly, component of the nuclear pore complex (NPC). NPC constitutes the exclusive means of nucleocytoplasmic transport. NPCs allow the passive diffusion of ions and small molecules and the active, nuclear transport receptor-mediated bidirectional transport of macromolecules such as proteins, RNAs, ribonucleoparticles (RNPs), and ribosomal subunits across the nuclear envelope. Due to its 8-fold rotational symmetry, all subunits are present with 8 copies or multiples thereof. ASM4 may form a subcomplex with NUP53, NDC1, and NUP170. Phosphorylated by CDC28.

The protein resides in the nucleus. The protein localises to the nuclear pore complex. It localises to the nucleus membrane. Its function is as follows. Functions as a component of the nuclear pore complex (NPC). NPC components, collectively referred to as nucleoporins (NUPs), can play the role of both NPC structural components and of docking or interaction partners for transiently associated nuclear transport factors. Active directional transport is assured by both, a Phe-Gly (FG) repeat affinity gradient for these transport factors across the NPC and a transport cofactor concentration gradient across the nuclear envelope (GSP1 and GSP2 GTPases associated predominantly with GTP in the nucleus, with GDP in the cytoplasm). May have a mitosis control function. The sequence is that of Nucleoporin ASM4 (ASM4) from Saccharomyces cerevisiae (strain ATCC 204508 / S288c) (Baker's yeast).